Consider the following 346-residue polypeptide: Dihydroorotase (346 aa).

Zn(2+) contacts are provided by histidine 13 and histidine 15. Residues histidine 15 to arginine 17 and asparagine 41 contribute to the substrate site. Residues lysine 99, histidine 136, and histidine 174 each coordinate Zn(2+). At lysine 99 the chain carries N6-carboxylysine. Position 136 (histidine 136) interacts with substrate. A substrate-binding site is contributed by leucine 219. Aspartate 247 is a binding site for Zn(2+). Residue aspartate 247 is part of the active site. Substrate-binding residues include histidine 251 and alanine 263.

Belongs to the metallo-dependent hydrolases superfamily. DHOase family. Class II DHOase subfamily. As to quaternary structure, homodimer. The cofactor is Zn(2+).

It carries out the reaction (S)-dihydroorotate + H2O = N-carbamoyl-L-aspartate + H(+). The protein operates within pyrimidine metabolism; UMP biosynthesis via de novo pathway; (S)-dihydroorotate from bicarbonate: step 3/3. Functionally, catalyzes the reversible cyclization of carbamoyl aspartate to dihydroorotate. The sequence is that of Dihydroorotase from Chelativorans sp. (strain BNC1).